The primary structure comprises 329 residues: Interleukin-12 subunit beta (329 aa).

The first 22 residues, 1-22, serve as a signal peptide directing secretion; the sequence is MHPQQLVIAWLSLVLLAPPLMA. Residues 23–106 enclose the Ig-like C2-type domain; the sequence is IWELEKNVYV…LSHSFLLIHK (84 aa). A disulfide bond links Cys-50 and Cys-90. Residues Asn-135 and Asn-223 are each glycosylated (N-linked (GlcNAc...) asparagine). Residues 238–329 enclose the Fibronectin type-III domain; that stretch reads PPKNLQLKPL…WSNWASVSCS (92 aa).

Belongs to the IL-12B family. As to quaternary structure, heterodimer with IL12A; disulfide-linked. The heterodimer is known as interleukin IL-12. Heterodimer with IL23A; disulfide-linked. The heterodimer is known as interleukin IL-23. Also secreted as a monomer. Interacts with NBR1; this interaction promotes IL-12 secretion.

It is found in the secreted. Its function is as follows. Cytokine that can act as a growth factor for activated T and NK cells, enhance the lytic activity of NK/lymphokine-activated killer cells, and stimulate the production of IFN-gamma by resting PBMC. Associates with IL23A to form the IL-23 interleukin, a heterodimeric cytokine which functions in innate and adaptive immunity. IL-23 may constitute with IL-17 an acute response to infection in peripheral tissues. IL-23 binds to a heterodimeric receptor complex composed of IL12RB1 and IL23R, activates the Jak-Stat signaling cascade, stimulates memory rather than naive T-cells and promotes production of pro-inflammatory cytokines. IL-23 induces autoimmune inflammation and thus may be responsible for autoimmune inflammatory diseases and may be important for tumorigenesis. The protein is Interleukin-12 subunit beta (IL12B) of Felis catus (Cat).